Here is a 106-residue protein sequence, read N- to C-terminus: L-rhamnose mutarotase (106 aa).

Tyr20 contacts substrate. His24 (proton donor) is an active-site residue. Residues Tyr43 and 78 to 79 (WW) contribute to the substrate site.

The protein belongs to the rhamnose mutarotase family. In terms of assembly, homodimer.

The protein resides in the cytoplasm. It catalyses the reaction alpha-L-rhamnose = beta-L-rhamnose. It functions in the pathway carbohydrate degradation; L-rhamnose degradation. Its function is as follows. Involved in the anomeric conversion of L-rhamnose. This chain is L-rhamnose mutarotase (rhaM), found in Rhizobium leguminosarum bv. trifolii.